A 305-amino-acid polypeptide reads, in one-letter code: MQSLPFDLVTGLGFGAFLLLLLALPLAFWAVSSQARTGIVQLLVALANLLLTSQLVLRWWESGHFPISNLYESLCFLAWACTLTQLLVERSWPSPIVAAAATPMGLGCIAFASFALPDQLQSAAPLVPALRSSWLVMHVSVIMVSYAALLVGSLLSLAVLLTDRGEALELRSSSIGSGGFRQSMRVGSDGVLQLQSIRLSTGEQLDSLSYRTITVGFLMLTVGIVSGAVWANEAWGSYWSWDPKETWALICWLVYAAYLHTRLSRGWQGRRPALVAVVGLVVIAVCYIGVNLLGIGLHSYGWFLG.

The next 8 helical transmembrane spans lie at 11–31 (GLGFGAFLLLLLALPLAFWAV), 37–57 (TGIVQLLVALANLLLTSQLVL), 63–83 (GHFPISNLYESLCFLAWACTL), 96–116 (IVAAAATPMGLGCIAFASFAL), 141–161 (VIMVSYAALLVGSLLSLAVLL), 212–232 (TITVGFLMLTVGIVSGAVWAN), 246–263 (TWALICWLVYAAYLHTRL), and 275–295 (VAVVGLVVIAVCYIGVNLLGI).

Belongs to the CcmF/CycK/Ccl1/NrfE/CcsA family. In terms of assembly, may interact with ccs1.

It is found in the cellular thylakoid membrane. Its function is as follows. Required during biogenesis of c-type cytochromes (cytochrome c6 and cytochrome f) at the step of heme attachment. The sequence is that of Cytochrome c biogenesis protein CcsA from Parasynechococcus marenigrum (strain WH8102).